The sequence spans 302 residues: MTSRSPFSTIPLSMNQDSYQTRTTVGIRKKTFSERACQFMEQAETFMAPFTPYMPLLGRFLIVATYFEDAIRIVTQWPEQVSYMRDYRRFRFGTAPLLLFVCVVLMLVGSTLVVFKKRQAYAIGSLLFVTLLQAFAYGLITSGEMFFRNMSVIGGLCLVASDTFIHRRINRFAGLPAVSEHNKRTYFQLAGRVLLIFMFLGLLAKEGSGISWTRILVHILSVTACAMVVIGFKAKFFAAVLVLILSVANFIINSFWSVPRESPYRDFYRYDFFQTLSIVGGLLYLVNTGPGKFSVDEKKKIY.

The next 6 membrane-spanning stretches (helical) occupy residues 95–115 (APLLLFVCVVLMLVGSTLVVF), 120–140 (AYAIGSLLFVTLLQAFAYGLI), 193–213 (VLLIFMFLGLLAKEGSGISWT), 215–235 (ILVHILSVTACAMVVIGFKAK), 236–256 (FFAAVLVLILSVANFIINSFW), and 271–291 (DFFQTLSIVGGLLYLVNTGPG). The Di-lysine motif motif lies at 299 to 302 (KKIY).

This sequence belongs to the SURF4 family.

It is found in the endoplasmic reticulum membrane. The sequence is that of Surfeit locus protein 4 homolog from Schizosaccharomyces pombe (strain 972 / ATCC 24843) (Fission yeast).